The primary structure comprises 520 residues: Putative cytochrome P450 CYP13A5 (520 aa).

Position 464 (C464) interacts with heme.

The protein belongs to the cytochrome P450 family. Requires heme as cofactor.

Cytochromes P450 are a group of heme-thiolate monooxygenases. They oxidize a variety of structurally unrelated compounds, including steroids, fatty acids, and xenobiotics. This Caenorhabditis elegans protein is Putative cytochrome P450 CYP13A5 (cyp-13A5).